We begin with the raw amino-acid sequence, 370 residues long: Quinolinate synthase (370 aa).

Iminosuccinate is bound by residues His-62 and Ser-83. Residue Cys-128 participates in [4Fe-4S] cluster binding. Iminosuccinate-binding positions include Tyr-154–Asn-156 and Ser-171. Cys-215 serves as a coordination point for [4Fe-4S] cluster. Iminosuccinate is bound by residues His-241–Glu-243 and Thr-258. Residue Cys-312 participates in [4Fe-4S] cluster binding.

It belongs to the quinolinate synthase family. Type 1 subfamily. The cofactor is [4Fe-4S] cluster.

Its subcellular location is the cytoplasm. It catalyses the reaction iminosuccinate + dihydroxyacetone phosphate = quinolinate + phosphate + 2 H2O + H(+). The protein operates within cofactor biosynthesis; NAD(+) biosynthesis; quinolinate from iminoaspartate: step 1/1. Its function is as follows. Catalyzes the condensation of iminoaspartate with dihydroxyacetone phosphate to form quinolinate. The polypeptide is Quinolinate synthase (Neisseria gonorrhoeae (strain ATCC 700825 / FA 1090)).